Consider the following 259-residue polypeptide: Deoxyribose-phosphate aldolase (259 aa).

Asp102 serves as the catalytic Proton donor/acceptor. Lys167 functions as the Schiff-base intermediate with acetaldehyde in the catalytic mechanism. Lys201 serves as the catalytic Proton donor/acceptor.

The protein belongs to the DeoC/FbaB aldolase family. DeoC type 2 subfamily.

The protein localises to the cytoplasm. It carries out the reaction 2-deoxy-D-ribose 5-phosphate = D-glyceraldehyde 3-phosphate + acetaldehyde. The protein operates within carbohydrate degradation; 2-deoxy-D-ribose 1-phosphate degradation; D-glyceraldehyde 3-phosphate and acetaldehyde from 2-deoxy-alpha-D-ribose 1-phosphate: step 2/2. Its function is as follows. Catalyzes a reversible aldol reaction between acetaldehyde and D-glyceraldehyde 3-phosphate to generate 2-deoxy-D-ribose 5-phosphate. This chain is Deoxyribose-phosphate aldolase, found in Cronobacter sakazakii (strain ATCC BAA-894) (Enterobacter sakazakii).